A 332-amino-acid chain; its full sequence is Glycerol-3-phosphate dehydrogenase [NAD(P)+] (332 aa).

Positions 11, 12, 32, and 106 each coordinate NADPH. Residues Lys-106, Gly-137, and Ser-139 each coordinate sn-glycerol 3-phosphate. An NADPH-binding site is contributed by Ala-141. Sn-glycerol 3-phosphate contacts are provided by Lys-192, Asp-245, Ser-255, Arg-256, and Asn-257. Lys-192 (proton acceptor) is an active-site residue. Arg-256 serves as a coordination point for NADPH. Residues Val-280 and Glu-282 each contribute to the NADPH site.

The protein belongs to the NAD-dependent glycerol-3-phosphate dehydrogenase family.

The protein localises to the cytoplasm. It carries out the reaction sn-glycerol 3-phosphate + NAD(+) = dihydroxyacetone phosphate + NADH + H(+). The enzyme catalyses sn-glycerol 3-phosphate + NADP(+) = dihydroxyacetone phosphate + NADPH + H(+). The protein operates within membrane lipid metabolism; glycerophospholipid metabolism. Its function is as follows. Catalyzes the reduction of the glycolytic intermediate dihydroxyacetone phosphate (DHAP) to sn-glycerol 3-phosphate (G3P), the key precursor for phospholipid synthesis. This is Glycerol-3-phosphate dehydrogenase [NAD(P)+] from Staphylococcus epidermidis (strain ATCC 12228 / FDA PCI 1200).